The following is a 495-amino-acid chain: MFAKIALVGRPNVGKSTLFNRLIRSNRAITHDMPGVTRDRMEGIVRGRNKRPFGIIDTGGITLDGHAAVAEGPAGIRGFEAEILRQAEEAIAECVAVCLVVDGREGLLPFDEHLASYLRRTGKPVLVVVNKVDGIEKEDVLTAEFHILGFPVLAVSAEHGHNLRWLESEMRDLLPEEDEDGIDDDAADATAVASADADVDADVETEGGTSASETEEGITEETVEDEPEAPLRLCMLGRPNAGKSSLVNALTGTNRMIVSDVAGTTRDSVDVAFEKDGLSYTFVDTAGVRRRSRITDTVERYSVNSSLKSTTKAHVTLLVLDAVEGITSQDKRLIELLDERKTPFMVLVNKMDLVPAKAREDGKRNFRDLLNFCQHVPLLFVSAKTGYELRSIVPLAARIRRECSVRIPTGQLNRAMEEVITRHQPPVVRRVRPKFYYMTQAESQPPTFVLFVNDADRIQAPYAKYIEKSLRRLFGIEHAPMRVHFRSSHKKNSEK.

Residues 3 to 178 form the EngA-type G 1 domain; the sequence is AKIALVGRPN…EMRDLLPEED (176 aa). Residues 9–16, 57–61, and 130–133 contribute to the GTP site; these read GRPNVGKS, DTGGI, and NKVD. The tract at residues 190 to 227 is disordered; it reads TAVASADADVDADVETEGGTSASETEEGITEETVEDEP. Over residues 213–227 the composition is skewed to acidic residues; the sequence is ETEEGITEETVEDEP. The EngA-type G 2 domain maps to 231–404; it reads LRLCMLGRPN…LAARIRRECS (174 aa). Residues 237–244, 284–288, and 349–352 contribute to the GTP site; these read GRPNAGKS, DTAGV, and NKMD. Residues 405–489 form the KH-like domain; the sequence is VRIPTGQLNR…PMRVHFRSSH (85 aa).

The protein belongs to the TRAFAC class TrmE-Era-EngA-EngB-Septin-like GTPase superfamily. EngA (Der) GTPase family. Associates with the 50S ribosomal subunit.

In terms of biological role, GTPase that plays an essential role in the late steps of ribosome biogenesis. The sequence is that of GTPase Der from Nitratidesulfovibrio vulgaris (strain DP4) (Desulfovibrio vulgaris).